A 187-amino-acid chain; its full sequence is Orotate phosphoribosyltransferase (187 aa).

5-phospho-alpha-D-ribose 1-diphosphate contacts are provided by residues arginine 99, lysine 100, lysine 103, histidine 105, and aspartate 125–serine 133. Orotate is bound by residues threonine 129 and arginine 157.

This sequence belongs to the purine/pyrimidine phosphoribosyltransferase family. PyrE subfamily. As to quaternary structure, homodimer. Mg(2+) is required as a cofactor.

It catalyses the reaction orotidine 5'-phosphate + diphosphate = orotate + 5-phospho-alpha-D-ribose 1-diphosphate. It functions in the pathway pyrimidine metabolism; UMP biosynthesis via de novo pathway; UMP from orotate: step 1/2. Catalyzes the transfer of a ribosyl phosphate group from 5-phosphoribose 1-diphosphate to orotate, leading to the formation of orotidine monophosphate (OMP). This chain is Orotate phosphoribosyltransferase, found in Leptospira borgpetersenii serovar Hardjo-bovis (strain L550).